The sequence spans 376 residues: Carbamoyl phosphate synthase small chain (376 aa).

The nucleophile stretch occupies residues 1–181; it reads MSKAVLVLED…VEPDGPPGVS (181 aa). The tract at residues 1-183 is CPSase; that stretch reads MSKAVLVLED…PDGPPGVSRF (183 aa). L-glutamine-binding residues include Ser-46, Gly-232, Gly-234, Phe-261, Gln-264, Asn-302, Gly-304, and Phe-305. Positions 184 to 376 constitute a Glutamine amidotransferase type-1 domain; it reads TVAALDLGIK…FVELMAGEGR (193 aa). Active-site residues include His-350 and Glu-352.

This sequence belongs to the CarA family. In terms of assembly, composed of two chains; the small (or glutamine) chain promotes the hydrolysis of glutamine to ammonia, which is used by the large (or ammonia) chain to synthesize carbamoyl phosphate. Tetramer of heterodimers (alpha,beta)4.

The enzyme catalyses hydrogencarbonate + L-glutamine + 2 ATP + H2O = carbamoyl phosphate + L-glutamate + 2 ADP + phosphate + 2 H(+). The catalysed reaction is L-glutamine + H2O = L-glutamate + NH4(+). The protein operates within amino-acid biosynthesis; L-arginine biosynthesis; carbamoyl phosphate from bicarbonate: step 1/1. It participates in pyrimidine metabolism; UMP biosynthesis via de novo pathway; (S)-dihydroorotate from bicarbonate: step 1/3. Small subunit of the glutamine-dependent carbamoyl phosphate synthetase (CPSase). CPSase catalyzes the formation of carbamoyl phosphate from the ammonia moiety of glutamine, carbonate, and phosphate donated by ATP, constituting the first step of 2 biosynthetic pathways, one leading to arginine and/or urea and the other to pyrimidine nucleotides. The small subunit (glutamine amidotransferase) binds and cleaves glutamine to supply the large subunit with the substrate ammonia. The sequence is that of Carbamoyl phosphate synthase small chain from Mycobacterium tuberculosis (strain CDC 1551 / Oshkosh).